Here is a 119-residue protein sequence, read N- to C-terminus: UPF0102 protein FP2501 (119 aa).

This sequence belongs to the UPF0102 family.

The sequence is that of UPF0102 protein FP2501 from Flavobacterium psychrophilum (strain ATCC 49511 / DSM 21280 / CIP 103535 / JIP02/86).